Consider the following 510-residue polypeptide: GMP synthase [glutamine-hydrolyzing] (510 aa).

The 191-residue stretch at 5-195 (LVIVLDFGGQ…LFNIADLSAD (191 aa)) folds into the Glutamine amidotransferase type-1 domain. The Nucleophile role is filled by C82. Active-site residues include H169 and E171. One can recognise a GMPS ATP-PPase domain in the interval 196–385 (WTMGSYIEET…LGLHREIVER (190 aa)). 223-229 (SGGIDST) contributes to the ATP binding site.

In terms of assembly, homodimer.

The enzyme catalyses XMP + L-glutamine + ATP + H2O = GMP + L-glutamate + AMP + diphosphate + 2 H(+). It participates in purine metabolism; GMP biosynthesis; GMP from XMP (L-Gln route): step 1/1. Catalyzes the synthesis of GMP from XMP. The sequence is that of GMP synthase [glutamine-hydrolyzing] from Natranaerobius thermophilus (strain ATCC BAA-1301 / DSM 18059 / JW/NM-WN-LF).